A 216-amino-acid chain; its full sequence is Probable GTP-binding protein EngB (216 aa).

Positions 26-210 (PMATIIFAGR…KNRIFEVIRE (185 aa)) constitute an EngB-type G domain. Residues 34–41 (GRSNVGKS), 59–63 (GVTRK), 76–79 (DMPG), 156–159 (NKLD), and 189–191 (ISA) each bind GTP. 2 residues coordinate Mg(2+): S41 and T61.

This sequence belongs to the TRAFAC class TrmE-Era-EngA-EngB-Septin-like GTPase superfamily. EngB GTPase family. Mg(2+) serves as cofactor.

Its function is as follows. Necessary for normal cell division and for the maintenance of normal septation. This is Probable GTP-binding protein EngB from Pyrococcus horikoshii (strain ATCC 700860 / DSM 12428 / JCM 9974 / NBRC 100139 / OT-3).